A 333-amino-acid chain; its full sequence is GTPase Obg (333 aa).

Positions 1–158 (MFIDSAKIYV…RNIDLELKLL (158 aa)) constitute an Obg domain. The disordered stretch occupies residues 121–143 (HGGKGNQHFATPTNRAPRYSEPA). The 165-residue stretch at 159-323 (ADIGLVGFPN…LKDVLWRIIQ (165 aa)) folds into the OBG-type G domain. Residues 165-172 (GFPNAGKS), 190-194 (FTTLE), 212-215 (DIPG), 279-282 (SKMD), and 304-306 (SSV) contribute to the GTP site. The Mg(2+) site is built by Ser172 and Thr192.

This sequence belongs to the TRAFAC class OBG-HflX-like GTPase superfamily. OBG GTPase family. In terms of assembly, monomer. Mg(2+) serves as cofactor.

Its subcellular location is the cytoplasm. Functionally, an essential GTPase which binds GTP, GDP and possibly (p)ppGpp with moderate affinity, with high nucleotide exchange rates and a fairly low GTP hydrolysis rate. Plays a role in control of the cell cycle, stress response, ribosome biogenesis and in those bacteria that undergo differentiation, in morphogenesis control. This is GTPase Obg from Chloroherpeton thalassium (strain ATCC 35110 / GB-78).